Consider the following 358-residue polypeptide: Methylthioribose-1-phosphate isomerase (358 aa).

Substrate is bound by residues Arg54–Ala56, Arg96, and Gln205. Asp246 functions as the Proton donor in the catalytic mechanism. Ala256–Lys257 contributes to the substrate binding site.

It belongs to the eIF-2B alpha/beta/delta subunits family. MtnA subfamily.

The catalysed reaction is 5-(methylsulfanyl)-alpha-D-ribose 1-phosphate = 5-(methylsulfanyl)-D-ribulose 1-phosphate. The protein operates within amino-acid biosynthesis; L-methionine biosynthesis via salvage pathway; L-methionine from S-methyl-5-thio-alpha-D-ribose 1-phosphate: step 1/6. In terms of biological role, catalyzes the interconversion of methylthioribose-1-phosphate (MTR-1-P) into methylthioribulose-1-phosphate (MTRu-1-P). The polypeptide is Methylthioribose-1-phosphate isomerase (Pseudomonas entomophila (strain L48)).